The sequence spans 447 residues: Cobyrinate a,c-diamide synthase (447 aa).

Positions Lys-252–Tyr-439 constitute a GATase cobBQ-type domain. The active-site Nucleophile is the Cys-331.

This sequence belongs to the CobB/CbiA family. Mg(2+) is required as a cofactor.

The catalysed reaction is cob(II)yrinate + 2 L-glutamine + 2 ATP + 2 H2O = cob(II)yrinate a,c diamide + 2 L-glutamate + 2 ADP + 2 phosphate + 2 H(+). It carries out the reaction Ni-sirohydrochlorin + 2 L-glutamine + 2 ATP + 2 H2O = Ni-sirohydrochlorin a,c-diamide + 2 L-glutamate + 2 ADP + 2 phosphate + 2 H(+). It functions in the pathway cofactor biosynthesis; adenosylcobalamin biosynthesis; cob(II)yrinate a,c-diamide from sirohydrochlorin (anaerobic route): step 10/10. Catalyzes the ATP-dependent amidation of the two carboxylate groups at positions a and c of cobyrinate, using either L-glutamine or ammonia as the nitrogen source. Involved in the biosynthesis of the unique nickel-containing tetrapyrrole coenzyme F430, the prosthetic group of methyl-coenzyme M reductase (MCR), which plays a key role in methanogenesis and anaerobic methane oxidation. Catalyzes the ATP-dependent amidation of the two carboxylate groups at positions a and c of Ni-sirohydrochlorin, using L-glutamine or ammonia as the nitrogen source. The protein is Cobyrinate a,c-diamide synthase of Methanococcus vannielii (strain ATCC 35089 / DSM 1224 / JCM 13029 / OCM 148 / SB).